The primary structure comprises 147 residues: Large ribosomal subunit protein bL9 (147 aa).

Belongs to the bacterial ribosomal protein bL9 family.

Binds to the 23S rRNA. In Citrifermentans bemidjiense (strain ATCC BAA-1014 / DSM 16622 / JCM 12645 / Bem) (Geobacter bemidjiensis), this protein is Large ribosomal subunit protein bL9.